The primary structure comprises 211 residues: Uracil phosphoribosyltransferase (211 aa).

5-phospho-alpha-D-ribose 1-diphosphate is bound by residues R78, R103, and 130–138 (DPMLATGGT). Uracil is bound by residues I195 and 200–202 (GDA). Residue D201 coordinates 5-phospho-alpha-D-ribose 1-diphosphate.

It belongs to the UPRTase family. It depends on Mg(2+) as a cofactor.

It carries out the reaction UMP + diphosphate = 5-phospho-alpha-D-ribose 1-diphosphate + uracil. The protein operates within pyrimidine metabolism; UMP biosynthesis via salvage pathway; UMP from uracil: step 1/1. With respect to regulation, allosterically activated by GTP. Its function is as follows. Catalyzes the conversion of uracil and 5-phospho-alpha-D-ribose 1-diphosphate (PRPP) to UMP and diphosphate. The protein is Uracil phosphoribosyltransferase of Streptomyces avermitilis (strain ATCC 31267 / DSM 46492 / JCM 5070 / NBRC 14893 / NCIMB 12804 / NRRL 8165 / MA-4680).